Here is a 118-residue protein sequence, read N- to C-terminus: Ribosome-binding factor A (118 aa).

It belongs to the RbfA family. Monomer. Binds 30S ribosomal subunits, but not 50S ribosomal subunits or 70S ribosomes.

The protein resides in the cytoplasm. In terms of biological role, one of several proteins that assist in the late maturation steps of the functional core of the 30S ribosomal subunit. Associates with free 30S ribosomal subunits (but not with 30S subunits that are part of 70S ribosomes or polysomes). Required for efficient processing of 16S rRNA. May interact with the 5'-terminal helix region of 16S rRNA. This is Ribosome-binding factor A from Bacillus cereus (strain B4264).